The following is a 595-amino-acid chain: Protein UL31 (595 aa).

A signal peptide spans 1 to 23 (MGDKPTLVTLLTVAVSSPPPSSP). The interval 47-94 (TATSEVGEKTAEQEVAAADPETGNERRENRENEGGETRTTGTTAVKRS) is disordered. Residues 69-82 (GNERRENRENEGGE) show a composition bias toward basic and acidic residues. N176 and N197 each carry an N-linked (GlcNAc...) asparagine; by host glycan.

It belongs to the herpesviridae U10 family. In terms of assembly, interacts with host CGAS.

The protein localises to the host cytoplasm. It is found in the host nucleus. Its function is as follows. Plays a role in the inhibition of host innate immune system by targeting host CGAS and promoting dissociation of DNA from CGAS, thereby inhibiting the enzymatic activity of CGAS. The chain is Protein UL31 from Homo sapiens (Human).